The following is a 419-amino-acid chain: 3-isopropylmalate dehydratase large subunit (419 aa).

Residues C300, C360, and C363 each contribute to the [4Fe-4S] cluster site.

Belongs to the aconitase/IPM isomerase family. LeuC type 2 subfamily. Heterodimer of LeuC and LeuD. [4Fe-4S] cluster is required as a cofactor.

The catalysed reaction is (2R,3S)-3-isopropylmalate = (2S)-2-isopropylmalate. Its pathway is amino-acid biosynthesis; L-leucine biosynthesis; L-leucine from 3-methyl-2-oxobutanoate: step 2/4. In terms of biological role, catalyzes the isomerization between 2-isopropylmalate and 3-isopropylmalate, via the formation of 2-isopropylmaleate. The polypeptide is 3-isopropylmalate dehydratase large subunit (Clostridium beijerinckii (strain ATCC 51743 / NCIMB 8052) (Clostridium acetobutylicum)).